A 260-amino-acid chain; its full sequence is Isoprenyl transferase (260 aa).

Asp-38 is an active-site residue. Residue Asp-38 coordinates Mg(2+). Substrate is bound by residues 39-42, Trp-43, Arg-51, His-55, and 83-85; these read GNGR and STE. Residue Asn-86 is the Proton acceptor of the active site. Residues Trp-87, Arg-89, Arg-206, and 212–214 contribute to the substrate site; that span reads RLS. Glu-225 serves as a coordination point for Mg(2+).

Belongs to the UPP synthase family. Homodimer. Mg(2+) serves as cofactor.

Catalyzes the condensation of isopentenyl diphosphate (IPP) with allylic pyrophosphates generating different type of terpenoids. This chain is Isoprenyl transferase, found in Heliobacterium mobile (Heliobacillus mobilis).